A 570-amino-acid chain; its full sequence is Sulfite reductase [NADPH] hemoprotein beta-component (570 aa).

4 residues coordinate [4Fe-4S] cluster: cysteine 434, cysteine 440, cysteine 479, and cysteine 483. Position 483 (cysteine 483) interacts with siroheme.

Belongs to the nitrite and sulfite reductase 4Fe-4S domain family. Alpha(8)-beta(8). The alpha component is a flavoprotein, the beta component is a hemoprotein. The cofactor is siroheme. [4Fe-4S] cluster is required as a cofactor.

The enzyme catalyses hydrogen sulfide + 3 NADP(+) + 3 H2O = sulfite + 3 NADPH + 4 H(+). The protein operates within sulfur metabolism; hydrogen sulfide biosynthesis; hydrogen sulfide from sulfite (NADPH route): step 1/1. Its function is as follows. Component of the sulfite reductase complex that catalyzes the 6-electron reduction of sulfite to sulfide. This is one of several activities required for the biosynthesis of L-cysteine from sulfate. The chain is Sulfite reductase [NADPH] hemoprotein beta-component from Shigella dysenteriae serotype 1 (strain Sd197).